Here is a 25-residue protein sequence, read N- to C-terminus: Fibrinolytic enzyme large subunit (25 aa).

A Peptidase S1 domain is found at 1–25 (VIGGTNASPGEIPWQLSQQRQSGSW). Residues 1–25 (VIGGTNASPGEIPWQLSQQRQSGSW) form a disordered region. Positions 15–25 (QLSQQRQSGSW) are enriched in polar residues.

It belongs to the peptidase S1 family. As to quaternary structure, heterodimer of a large and a small subunit held together by hydrophobic interactions.

Functionally, cleaves the carboxyl side of basic amino acids, small neutral amino acids, and Met residue. It is also a plasminogen activator. The chain is Fibrinolytic enzyme large subunit from Eisenia fetida (Red wiggler worm).